The primary structure comprises 793 residues: Protein smoothened (793 aa).

A signal peptide spans 1–32 (MAAGRPVRGPELAPRRLLQLLLLVLLGGPGRG). Over 33–237 (AALSGNVTGP…EAEHQDMHSY (205 aa)) the chain is Extracellular. A disordered region spans residues 35–61 (LSGNVTGPGPHSASGSSRRDVPVTSPP). Asn-38 is a glycosylation site (N-linked (GlcNAc...) asparagine). 5 disulfides stabilise this stretch: Cys-68-Cys-182, Cys-74-Cys-138, Cys-82-Cys-131, Cys-122-Cys-158, and Cys-151-Cys-173. An FZ domain is found at 69 to 185 (GRAAHCEPLR…DHFPEGCPNE (117 aa)). Position 99 (Asp-99) interacts with cholesterol. A glycan (N-linked (GlcNAc...) asparagine) is linked at Asn-192. Cystine bridges form between Cys-197–Cys-217, Cys-221–Cys-299, and Cys-318–Cys-394. A helical transmembrane segment spans residues 238-258 (IAAFGAVTGLCTLFTLATFVA). Topologically, residues 259–265 (DWRNSNR) are cytoplasmic. Residues 266–286 (YPAVILFYVNACFFVGSIGWL) form a helical membrane-spanning segment. At 287–318 (AQFMDGARREIVCRADGTMRFGEPTSSETLSC) the chain is on the extracellular side. Residues 319–339 (VIIFVIVYYALMAGVVWFVVL) traverse the membrane as a helical segment. Topologically, residues 340 to 362 (TYAWHTSFKALGTTYQPLSGKTS) are cytoplasmic. A helical membrane pass occupies residues 363-383 (YFHLLTWSLPFVLTVAILAVA). Residues 384–406 (QVDGDSVSGICFVGYKNYRYRAG) lie on the Extracellular side of the membrane. Tyr-398 contacts cholesterol. Residues 407–427 (FVLAPIGLVLIVGGYFLIRGV) form a helical membrane-spanning segment. Residues 428–455 (MTLFSIKSNHPGLLSEKAASKINETMLR) lie on the Cytoplasmic side of the membrane. The helical transmembrane segment at 456 to 476 (LGIFGFLAFGFVLITFSCHFY) threads the bilayer. Residues 477-528 (DFFNQAEWERSFRDYVLCQANVTIGLPTKKPIPDCEIKNRPSLLVEKINLFA) lie on the Extracellular side of the membrane. Cys-494 and Cys-511 are disulfide-bonded. N-linked (GlcNAc...) asparagine glycosylation occurs at Asn-497. A helical transmembrane segment spans residues 529–549 (MFGTGIAMSTWVWTKATLLIW). Residues 542 to 573 (TKATLLIWRRTWCRLTGHSDDEPKRIKKSKMI) are interaction with BBS5 and BBS7. Residues 550-793 (RRTWCRLTGH…AEILDADSDF (244 aa)) are Cytoplasmic-facing. A phosphoserine mark is found at Ser-560, Ser-578, and Ser-594. The interval 574-657 (AKAFSKRREL…TPVPPEEQAN (84 aa)) is required for interaction with PRKACA. The interaction with DLG5 stretch occupies residues 585-597 (QNPGQELSFSMHT). Phosphothreonine is present on Thr-597. Phosphoserine occurs at positions 599 and 642. Thr-644 and Thr-648 each carry phosphothreonine. Ser-666 bears the Phosphoserine mark. Positions 674–684 (GRKKKRRKRKK) are enriched in basic residues. Positions 674–703 (GRKKKRRKRKKEVCPLRPAPELHHSAPVPA) are disordered.

The protein belongs to the G-protein coupled receptor Fz/Smo family. As to quaternary structure, homodimer. Interacts (via C-terminus) with protein kinase A catalytic subunit PRKACA; interacts with free PRKACA subunits and the interaction leads to sequestration of PRKACA at the membrane, preventing PRKACA-mediated phosphorylation of GLI transcription factors. Interacts with ARRB2. Interacts with BBS5 and BBS7; the interactions are indicative for the association of SMO with the BBsome complex to facilitate ciliary localization of SMO. Interacts with KIF7, DLG5 and SDCBP. Interacts with GAS8/DRC4. Post-translationally, phosphorylation by GRK kinases is required for interaction with protein kinase A catalytic subunit PRKACA. In terms of tissue distribution, during early somite stages of embryonic development, modestly up-regulated in the cells of the node (at protein level).

The protein localises to the cell membrane. It localises to the cell projection. It is found in the cilium. Its function is as follows. G protein-coupled receptor which associates with the patched protein (PTCH) to transduce hedgehog protein signaling. Binding of sonic hedgehog (SHH) to its receptor patched prevents inhibition of smoothened (SMO) by patched. When active, SMO binds to and sequesters protein kinase A catalytic subunit PRKACA at the cell membrane, preventing PRKACA-mediated phosphorylation of GLI transcription factors which releases the GLI proteins from PRKACA-mediated inhibition and allows for transcriptional activation of hedgehog pathway target genes. Required for the accumulation of KIF7, GLI2 and GLI3 in the cilia. Interacts with DLG5 at the ciliary base to induce the accumulation of KIF7 and GLI2 at the ciliary tip for GLI2 activation. The polypeptide is Protein smoothened (Smo) (Mus musculus (Mouse)).